The following is a 329-amino-acid chain: Cytosolic arginine sensor for mTORC1 subunit 1 (329 aa).

Phosphoserine; by PKB/AKT1 is present on Ser-14. 2 consecutive ACT domains span residues 72-138 (AEAT…HTLA) and 260-321 (GELW…EVLQ). Residues 111 to 112 (SV), Gly-274, 280 to 281 (IV), and 300 to 304 (TFNFD) contribute to the L-arginine site.

The protein belongs to the GATS family. Forms homodimers and heterodimers with CASTOR2. Interacts with the GATOR2 complex which is composed of MIOS, SEC13, SEH1L, WDR24 and WDR59; the interaction is negatively regulated by arginine. Interacts with TM4SF5; the interaction is positively regulated by leucine and is negatively regulated by arginine. In terms of processing, phosphorylation at Ser-14 by AKT1, promoting the interaction between CASTOR1 and RNF167. Post-translationally, ubiquitinated by RNF167 via 'Lys-29'-polyubiquitination, leading to its degradation, releasing the GATOR2 complex. Ubiquitination by RNF167 is promoted by phosphorylation at Ser-14 by AKT1. As to expression, widely expressed.

The protein localises to the cytoplasm. Its subcellular location is the cytosol. Its function is as follows. Functions as an intracellular arginine sensor within the amino acid-sensing branch of the TORC1 signaling pathway. As a homodimer or a heterodimer with CASTOR2, binds and inhibits the GATOR subcomplex GATOR2 and thereby mTORC1. Binding of arginine to CASTOR1 allosterically disrupts the interaction of CASTOR1-containing dimers with GATOR2 which can in turn activate mTORC1 and the TORC1 signaling pathway. The polypeptide is Cytosolic arginine sensor for mTORC1 subunit 1 (Homo sapiens (Human)).